A 150-amino-acid chain; its full sequence is Catabolic 3-dehydroquinase 1 (150 aa).

Tyr-24 functions as the Proton acceptor in the catalytic mechanism. Substrate-binding residues include Asn-75, His-81, and Asp-88. The active-site Proton donor is the His-101. Substrate-binding positions include 102–103 and Arg-112; that span reads VS.

It belongs to the type-II 3-dehydroquinase family. As to quaternary structure, homododecamer. Adopts a ring-like structure, composed of an arrangement of two hexameric rings stacked on top of one another.

It carries out the reaction 3-dehydroquinate = 3-dehydroshikimate + H2O. It participates in aromatic compound metabolism; 3,4-dihydroxybenzoate biosynthesis; 3,4-dihydroxybenzoate from 3-dehydroquinate: step 1/2. Its function is as follows. Is involved in the catabolism of quinate. Allows the utilization of quinate as carbon source via the beta-ketoadipate pathway. This Neosartorya fischeri (strain ATCC 1020 / DSM 3700 / CBS 544.65 / FGSC A1164 / JCM 1740 / NRRL 181 / WB 181) (Aspergillus fischerianus) protein is Catabolic 3-dehydroquinase 1.